The sequence spans 518 residues: Glutamate--cysteine ligase (518 aa).

Belongs to the glutamate--cysteine ligase type 1 family. Type 1 subfamily.

The enzyme catalyses L-cysteine + L-glutamate + ATP = gamma-L-glutamyl-L-cysteine + ADP + phosphate + H(+). The protein operates within sulfur metabolism; glutathione biosynthesis; glutathione from L-cysteine and L-glutamate: step 1/2. This chain is Glutamate--cysteine ligase, found in Shigella boydii serotype 4 (strain Sb227).